A 733-amino-acid chain; its full sequence is Zinc finger protein indra (733 aa).

The ZAD domain maps to 17 to 91 (VRCDHCGTSQ…RETVDRVQEQ (75 aa)). Zn(2+)-binding residues include Cys-19, Cys-22, Cys-64, and Cys-67. Over residues 90-100 (EQPAKKTKVAE) the composition is skewed to basic and acidic residues. The disordered stretch occupies residues 90-121 (EQPAKKTKVAEIEEPSTQESDKKAVKVPKKNT). Residues Ser-109, Ser-153, and Ser-176 each carry the phosphoserine modification. Phosphothreonine is present on residues Thr-180 and Thr-188. 2 consecutive C2H2-type zinc fingers follow at residues 228–251 (FQCP…QKEH) and 259–282 (YPCT…RDTH). Residues 285–316 (TFESEAKTKAKESKEKEAKSGAKNKIDAKAKE) are compositionally biased toward basic and acidic residues. Residues 285–336 (TFESEAKTKAKESKEKEAKSGAKNKIDAKAKETNAVSQRKKPKEKKSKEKKT) are disordered. C2H2-type zinc fingers lie at residues 416-439 (FQCE…KTVH) and 447-469 (FKCH…MTLH). Disordered stretches follow at residues 499–525 (IENT…FTNR) and 540–622 (AFKT…SSDV). Residues 592–602 (SVSTTNGNSPA) show a composition bias toward polar residues. Residues Ser-600, Ser-642, and Ser-646 each carry the phosphoserine modification. Phosphothreonine is present on Thr-647. 2 consecutive C2H2-type zinc fingers follow at residues 653-676 (LSCD…EKKH) and 708-733 (LPCG…RKRH). At Ser-654 the chain carries Phosphoserine.

It belongs to the krueppel C2H2-type zinc-finger protein family.

The protein resides in the nucleus. It localises to the nucleolus. Required for rDNA copy number maintenance and non-random sister chromatid segregation (NRSS) following unequal sister chromatid exchange. Binds ribosomal DNA (rDNA) preferentially binding to intergenic spacers (IGS) regions on both X and Y chromosomes. Essential for NRSS, a mechanism which contributes to the recovery and maintenance of inherently unstable rDNA copy numbers so that the integrity of the germline genome is upheld over generations and germline immortality is sustained. May be involved in transcriptional regulation. The polypeptide is Zinc finger protein indra (Drosophila melanogaster (Fruit fly)).